A 789-amino-acid polypeptide reads, in one-letter code: Protein FLOWERING LOCUS D (789 aa).

The tract at residues 1–23 (MVSFSAPKKRRRGRSQRSMSSLN) is disordered. The SWIRM domain occupies 76–177 (NKEATTEALL…FGIAQAIKDK (102 aa)). FAD is bound by residues Ser195, Glu214, Arg216, Arg222, and 240-243 (GGSV). Residue Lys287 forms a Glycyl lysine isopeptide (Lys-Gly) (interchain with G-Cter in SUMO) linkage. FAD contacts are provided by residues Glu595, 604–605 (TM), and 607–612 (GAFVTG). Glycyl lysine isopeptide (Lys-Gly) (interchain with G-Cter in SUMO) cross-links involve residues Lys693 and Lys770.

This sequence belongs to the flavin monoamine oxidase family. Interacts with HDA6. FAD is required as a cofactor. Sumoylated at Lys-287, Lys-693 and Lys-770 by SIZ1. Sumoylation alters its activity and the histone H4 acetylation status of FLC locus, promoting FLC expression.

Functionally, probable histone demethylase that promotes flowering independently of the photoperiod and vernalization pathways by repressing FLOWERING LOCUS C (FLC), a floral repressor that blocks the transition from vegetative to reproductive development. Probably mediates histone H3 'Lys-4' demethylation at FLC locus. Seems to act in partial redundancy with LDL1 and LDL2 to repress FLC expression. Required for histone H4 deacetylation of FLC locus. May be a component of the histone deacetylase complex. Forms a histone deacetylase complex with HDA5, HDA6 and MSI4/FVE that represses FLC gene expression to control flowering time. Required for systemic acquired resistance (SAR) toward pathogenic bacteria (e.g. Pseudomonas syringae pv tomato DC3000 (avrPto)). Together with FLD and MSI4/FVE, contributes to dehydroabietinal-dependent (DA, a diterpenoid tricyclic diterpene) activation of flowering ans SAR. The sequence is that of Protein FLOWERING LOCUS D from Arabidopsis thaliana (Mouse-ear cress).